Reading from the N-terminus, the 210-residue chain is Na(+)-translocating NADH-quinone reductase subunit D (210 aa).

6 consecutive transmembrane segments (helical) span residues 14–34 (PIIN…ALAV), 42–62 (LVMT…ISLI), 72–92 (IIVQ…VLQA), 96–116 (AISK…IVMG), 131–151 (FMDG…VGVV), and 178–198 (NGLL…IWLI).

It belongs to the NqrDE/RnfAE family. As to quaternary structure, composed of six subunits; NqrA, NqrB, NqrC, NqrD, NqrE and NqrF.

It localises to the cell inner membrane. It carries out the reaction a ubiquinone + n Na(+)(in) + NADH + H(+) = a ubiquinol + n Na(+)(out) + NAD(+). In terms of biological role, NQR complex catalyzes the reduction of ubiquinone-1 to ubiquinol by two successive reactions, coupled with the transport of Na(+) ions from the cytoplasm to the periplasm. NqrA to NqrE are probably involved in the second step, the conversion of ubisemiquinone to ubiquinol. This is Na(+)-translocating NADH-quinone reductase subunit D from Shewanella frigidimarina (strain NCIMB 400).